Reading from the N-terminus, the 338-residue chain is Aspartate carbamoyltransferase catalytic subunit (338 aa).

Carbamoyl phosphate is bound by residues R59 and T60. K87 lines the L-aspartate pocket. Positions 109, 142, and 145 each coordinate carbamoyl phosphate. R182 and R253 together coordinate L-aspartate. Carbamoyl phosphate-binding residues include G294 and P295.

This sequence belongs to the aspartate/ornithine carbamoyltransferase superfamily. ATCase family. Heterododecamer (2C3:3R2) of six catalytic PyrB chains organized as two trimers (C3), and six regulatory PyrI chains organized as three dimers (R2).

The catalysed reaction is carbamoyl phosphate + L-aspartate = N-carbamoyl-L-aspartate + phosphate + H(+). The protein operates within pyrimidine metabolism; UMP biosynthesis via de novo pathway; (S)-dihydroorotate from bicarbonate: step 2/3. In terms of biological role, catalyzes the condensation of carbamoyl phosphate and aspartate to form carbamoyl aspartate and inorganic phosphate, the committed step in the de novo pyrimidine nucleotide biosynthesis pathway. This is Aspartate carbamoyltransferase catalytic subunit from Prochlorococcus marinus (strain MIT 9515).